Consider the following 46-residue polypeptide: Esculentin-1 (46 aa).

The cysteines at positions 40 and 46 are disulfide-linked.

As to expression, expressed by the skin glands.

The protein localises to the secreted. In terms of biological role, antimicrobial peptide. Stimulates insulin release by BRIN-BD11 cells in vitro. The polypeptide is Esculentin-1 (Pelophylax saharicus (Sahara frog)).